The sequence spans 74 residues: Conotoxin ArMKLT2-041 (74 aa).

A signal peptide spans 1–22; sequence MKLTCVLIVAVLFLTACQLIAA. Residues 23–46 constitute a propeptide that is removed on maturation; it reads DDSRDLQKFPRRKMRDGMLNTKNT. Glutamine 49 carries the pyrrolidone carboxylic acid modification. 3 cysteine pairs are disulfide-bonded: cysteine 50–cysteine 65, cysteine 57–cysteine 68, and cysteine 64–cysteine 73.

Belongs to the conotoxin O1 superfamily. Expressed by the venom duct.

The protein localises to the secreted. In Conus arenatus (Sand-dusted cone), this protein is Conotoxin ArMKLT2-041.